A 474-amino-acid polypeptide reads, in one-letter code: tRNA-2-methylthio-N(6)-dimethylallyladenosine synthase (474 aa).

Residues 3–120 (KKLHIKTWGC…LPEMINHVQG (118 aa)) form the MTTase N-terminal domain. Cys12, Cys49, Cys83, Cys157, Cys161, and Cys164 together coordinate [4Fe-4S] cluster. The Radical SAM core domain occupies 143-375 (RADGPTAFVS…QDRITKQAMR (233 aa)). Positions 378-441 (RLMLGTVQRI…TNSLRGIVVR (64 aa)) constitute a TRAM domain.

It belongs to the methylthiotransferase family. MiaB subfamily. As to quaternary structure, monomer. [4Fe-4S] cluster is required as a cofactor.

It localises to the cytoplasm. It carries out the reaction N(6)-dimethylallyladenosine(37) in tRNA + (sulfur carrier)-SH + AH2 + 2 S-adenosyl-L-methionine = 2-methylsulfanyl-N(6)-dimethylallyladenosine(37) in tRNA + (sulfur carrier)-H + 5'-deoxyadenosine + L-methionine + A + S-adenosyl-L-homocysteine + 2 H(+). Catalyzes the methylthiolation of N6-(dimethylallyl)adenosine (i(6)A), leading to the formation of 2-methylthio-N6-(dimethylallyl)adenosine (ms(2)i(6)A) at position 37 in tRNAs that read codons beginning with uridine. In Pectobacterium atrosepticum (strain SCRI 1043 / ATCC BAA-672) (Erwinia carotovora subsp. atroseptica), this protein is tRNA-2-methylthio-N(6)-dimethylallyladenosine synthase.